Here is a 259-residue protein sequence, read N- to C-terminus: Dickkopf-related protein 2 (259 aa).

The N-terminal stretch at 1–33 (MAALMRSKDSSCCLLLLAAVLMVESSQIGSSRA) is a signal peptide. N52 carries an N-linked (GlcNAc...) asparagine glycan. Residues 78 to 127 (CSSDKECEVGRYCHSPHQGSSACMVCRRKKKRCHRDGMCCPSTRCNNGIC) are DKK-type Cys-1. Disulfide bonds link C183–C195, C189–C204, C194–C231, C214–C239, and C233–C256. Residues 183–256 (CLRSSDCIEG…YSSKARLHVC (74 aa)) form a DKK-type Cys-2 region.

It belongs to the dickkopf family. As to quaternary structure, interacts with LRP5 and LRP6. Post-translationally, may be proteolytically processed by a furin-like protease. Expressed in heart, brain, skeletal muscle and lung.

It is found in the secreted. In terms of biological role, antagonizes canonical Wnt signaling by inhibiting LRP5/6 interaction with Wnt and by forming a ternary complex with the transmembrane protein KREMEN that promotes internalization of LRP5/6. DKKs play an important role in vertebrate development, where they locally inhibit Wnt regulated processes such as antero-posterior axial patterning, limb development, somitogenesis and eye formation. In the adult, Dkks are implicated in bone formation and bone disease, cancer and Alzheimer disease. This is Dickkopf-related protein 2 (DKK2) from Homo sapiens (Human).